The sequence spans 524 residues: Tissue-resident T-cell transcription regulator protein ZNF683 (524 aa).

Basic and acidic residues predominate over residues 130-142 (NKDKLGKQPERAG). 2 disordered regions span residues 130–166 (NKDK…NRKS) and 265–303 (QALP…LSSQ). C2H2-type zinc fingers lie at residues 322–344 (YECN…LRVH) and 350–372 (FQCA…HLVH). The segment at 398 to 420 (REREVCHKRFSSSSNLKTHLRLH) adopts a C2H2-type 3; degenerate zinc-finger fold. The C2H2-type 4 zinc-finger motif lies at 426–448 (FQCSVCRSRFTQHIHLKLHHRLH).

It belongs to the krueppel C2H2-type zinc-finger protein family. In terms of tissue distribution, expressed in terminally differentiated effector CD8(+) T-cells, but not in naive and central memory cells. Expressed in terminally differentiated natural killer (NK) cells and natural killer (NKT) T-cells (at protein level). Expressed strongly in effector-type CD8(+) T-cells and weakly in naive and memory CD8(+) T-cells. Expressed in terminally differentiated natural killer (NK) cells. Isoform 2 is strongly expressed in effector CD8(+) T and natural killer (NK) cells. Isoform 1 is expressed in effector CD8(+) T and natural killer (NK) cells. As to expression, (Microbial infection) Expressed in cytomegalovirus (CMV)-infected effector CD8(+) T-cells (at protein level).

Its subcellular location is the nucleus. In terms of biological role, transcription factor that mediates a transcriptional program in various innate and adaptive immune tissue-resident lymphocyte T-cell types such as tissue-resident memory T (Trm), natural killer (trNK) and natural killer T (NKT) cells and negatively regulates gene expression of proteins that promote the egress of tissue-resident T-cell populations from non-lymphoid organs. Plays a role in the development, retention and long-term establishment of adaptive and innate tissue-resident lymphocyte T cell types in non-lymphoid organs, such as the skin and gut, but also in other nonbarrier tissues like liver and kidney, and therefore may provide immediate immunological protection against reactivating infections or viral reinfection. Also plays a role in the differentiation of both thymic and peripheral NKT cells. Negatively regulates the accumulation of interferon-gamma (IFN-gamma) in NKT cells at steady state or after antigenic stimulation. Positively regulates granzyme B production in NKT cells after innate stimulation. Associates with the transcriptional repressor PRDM1/BLIMP1 to chromatin at gene promoter regions. Functionally, lacks transcriptional repressor activity. Binds to DNA within promoter regions of the transcriptional repressor PRDM1/BLIMP1 target sites. Unable to regulate interferon-gamma (IFN-gamma) production in cytomegalovirus (CMV)-infected effector CD8(+) T-cells. Its function is as follows. Transcriptional repressor that binds to DNA within promoter regions of the transcriptional repressor PRDM1/BLIMP1 target sites. Regulates interferon-gamma (IFN-gamma) production in cytomegalovirus (CMV)-infected effector CD8(+) T cells. The sequence is that of Tissue-resident T-cell transcription regulator protein ZNF683 from Homo sapiens (Human).